A 377-amino-acid polypeptide reads, in one-letter code: MAAPRWSASGPWIRGNGQGCGSLFTLVSKPFCAAAAASTAINAQRLAEKLRAQKREQDTKKEPVSTNAVQRRVQEIVRFTRQLQRVHPNVLAKALTRGILHQDKNLVVINKPYGLPVHGGPGVQLCITDVLPILAKMLHGHKAEPLHLCHRLDKETTGVMVLAWDKDMAHQVQELFRTRQVVKKYWAITVHVPMPSAGVVDIPIVEKEAQGQQQHHKMTLSPSYRMDDGKMVKVRRSRNAQVAVTQYQVLSSTLSSALVELQPITGIKHQLRVHLSFGLDCPILGDHKYSDWNRLAPQKLSVGTLKKLGLEQSKARYIPLHLHARQLILPALGSGKEELNLVCKLPRFFVHSLHRLRLEMPNEDQNENNEAKCLGAQ.

The N-terminal 15 residues, 1-15, are a transit peptide targeting the mitochondrion; it reads MAAPRWSASGPWIRG. The stretch at 36–62 forms a coiled coil; sequence AASTAINAQRLAEKLRAQKREQDTKKE. Residue Asp-153 is part of the active site.

This sequence belongs to the pseudouridine synthase RluA family. As to quaternary structure, interacts with 16S mt-rRNA, mt-tRNA(Phe) and mt-tRNA(Met). Forms a regulatory protein-RNA complex, consisting of RCC1L, NGRN, RPUSD3, RPUSD4, TRUB2, FASTKD2 and 16S mt-rRNA.

The protein localises to the mitochondrion matrix. Its subcellular location is the nucleus. The protein resides in the cytoplasm. The enzyme catalyses uridine in 5S rRNA = pseudouridine in 5S rRNA. It carries out the reaction a uridine in tRNA = a pseudouridine in tRNA. It catalyses the reaction a uridine in mRNA = a pseudouridine in mRNA. Its function is as follows. Catalyzes uridine to pseudouridine isomerization (pseudouridylation) of different mitochondrial RNA substrates. Acts on position 1397 in 16S mitochondrial ribosomal RNA (16S mt-rRNA). This modification is required for the assembly of 16S mt-rRNA into a functional mitochondrial ribosome. As a component of a functional protein-RNA module, consisting of RCC1L, NGRN, RPUSD3, RPUSD4, TRUB2, FASTKD2 and 16S mt-rRNA, controls 16S mt-rRNA abundance and is required for intra-mitochondrial translation. Acts on position 39 in mitochondrial tRNA(Phe). Also catalyzes pseudouridylation of mRNAs in nucleus: acts as a regulator of pre-mRNA splicing by mediating pseudouridylation of pre-mRNAs at locations associated with alternatively spliced regions. Pseudouridylation of pre-mRNAs near splice sites directly regulates mRNA splicing and mRNA 3'-end processing. This chain is Pseudouridylate synthase RPUSD4, mitochondrial, found in Homo sapiens (Human).